Reading from the N-terminus, the 472-residue chain is Cannabinoid receptor 1 (472 aa).

At Met1–Gln116 the chain is on the extracellular side. Positions Lys2 to Val23 are required for mitochondrial localization. 2 N-linked (GlcNAc...) asparagine glycosylation sites follow: Asn77 and Asn83. Residues Leu117–Leu142 traverse the membrane as a helical segment. Topologically, residues His143–His154 are cytoplasmic. A helical membrane pass occupies residues Phe155 to Ile175. Topologically, residues Asp176–Asn187 are extracellular. A helical transmembrane segment spans residues Val188–Ile212. Residues Asp213–Lys232 are Cytoplasmic-facing. A helical transmembrane segment spans residues Ala233–Trp255. Topologically, residues Asn256–Glu273 are extracellular. Residues Thr274 to Trp299 traverse the membrane as a helical segment. Residues Lys300–Thr344 are Cytoplasmic-facing. A helical membrane pass occupies residues Leu345–Tyr365. Residues Asp366 to Thr377 are Extracellular-facing. Residues Val378–Leu399 traverse the membrane as a helical segment. Over Arg400–Leu472 the chain is Cytoplasmic. Cys415 is lipidated: S-palmitoyl cysteine. Ser425 and Ser429 each carry phosphoserine.

It belongs to the G-protein coupled receptor 1 family. As to quaternary structure, interacts (via C-terminus) with CNRIP1; this interaction attenuates constitutive, but not agonist-dependent, inhibition of voltage-gated Ca(2+) channels in neurons. Associates with G protein alpha subunits, including G(i) alpha-1/GNAI1, G(i) alpha-3/GNAI3 and G(o)-alpha/GNAO1; palmitoylation is important for interaction with GNAI3 and GNAO1. Palmitoylation at Cys-415 is important for recruitment at plasma membrane and lipid rafts and association with G protein alpha subunits. As to expression, widely expressed, with highest levels in fetal and adult brain. Expression levels of isoform 2 and isoform 3 are much lower than those of isoform 1.

The protein resides in the cell membrane. It localises to the membrane raft. It is found in the mitochondrion outer membrane. Its subcellular location is the cell projection. The protein localises to the axon. The protein resides in the presynapse. Hemopressin, a peptide derived from hemoglobin subunit alpha (HBA1 and/or HBA2), acts as an antagonist peptide: hemopressin-binding efficiently blocks cannabinoid receptor CNR1 and subsequent signaling. Functionally, G-protein coupled receptor for endogenous cannabinoids (eCBs), including N-arachidonoylethanolamide (also called anandamide or AEA) and 2-arachidonoylglycerol (2-AG), as well as phytocannabinoids, such as delta(9)-tetrahydrocannabinol (THC). Mediates many cannabinoid-induced effects, acting, among others, on food intake, memory loss, gastrointestinal motility, catalepsy, ambulatory activity, anxiety, chronic pain. Signaling typically involves reduction in cyclic AMP. In the hypothalamus, may have a dual effect on mitochondrial respiration depending upon the agonist dose and possibly upon the cell type. Increases respiration at low doses, while decreases respiration at high doses. At high doses, CNR1 signal transduction involves G-protein alpha-i protein activation and subsequent inhibition of mitochondrial soluble adenylate cyclase, decrease in cyclic AMP concentration, inhibition of protein kinase A (PKA)-dependent phosphorylation of specific subunits of the mitochondrial electron transport system, including NDUFS2. In the hypothalamus, inhibits leptin-induced reactive oxygen species (ROS) formation and mediates cannabinoid-induced increase in SREBF1 and FASN gene expression. In response to cannabinoids, drives the release of orexigenic beta-endorphin, but not that of melanocyte-stimulating hormone alpha/alpha-MSH, from hypothalamic POMC neurons, hence promoting food intake. In the hippocampus, regulates cellular respiration and energy production in response to cannabinoids. Involved in cannabinoid-dependent depolarization-induced suppression of inhibition (DSI), a process in which depolarization of CA1 postsynaptic pyramidal neurons mobilizes eCBs, which retrogradely activate presynaptic CB1 receptors, transiently decreasing GABAergic inhibitory neurotransmission. Also reduces excitatory synaptic transmission. In superior cervical ganglions and cerebral vascular smooth muscle cells, inhibits voltage-gated Ca(2+) channels in a constitutive, as well as agonist-dependent manner. In cerebral vascular smooth muscle cells, cannabinoid-induced inhibition of voltage-gated Ca(2+) channels leads to vasodilation and decreased vascular tone. Induces leptin production in adipocytes and reduces LRP2-mediated leptin clearance in the kidney, hence participating in hyperleptinemia. In adipose tissue, CNR1 signaling leads to increased expression of SREBF1, ACACA and FASN genes. In the liver, activation by endocannabinoids leads to increased de novo lipogenesis and reduced fatty acid catabolism, associated with increased expression of SREBF1/SREBP-1, GCK, ACACA, ACACB and FASN genes. May also affect de novo cholesterol synthesis and HDL-cholesteryl ether uptake. Peripherally modulates energy metabolism. In high carbohydrate diet-induced obesity, may decrease the expression of mitochondrial dihydrolipoyl dehydrogenase/DLD in striated muscles, as well as that of selected glucose/ pyruvate metabolic enzymes, hence affecting energy expenditure through mitochondrial metabolism. In response to cannabinoid anandamide, elicits a pro-inflammatory response in macrophages, which involves NLRP3 inflammasome activation and IL1B and IL18 secretion. In macrophages infiltrating pancreatic islets, this process may participate in the progression of type-2 diabetes and associated loss of pancreatic beta-cells. Its function is as follows. Binds both 2-arachidonoylglycerol (2-AG) and anandamide. Only binds 2-arachidonoylglycerol (2-AG) with high affinity. Contrary to its effect on isoform 1, 2-AG behaves as an inverse agonist on isoform 2 in assays measuring GTP binding to membranes. In terms of biological role, only binds 2-arachidonoylglycerol (2-AG) with high affinity. Contrary to its effect on isoform 1, 2-AG behaves as an inverse agonist on isoform 3 in assays measuring GTP binding to membranes. The polypeptide is Cannabinoid receptor 1 (CNR1) (Homo sapiens (Human)).